We begin with the raw amino-acid sequence, 1060 residues long: Carbamoyl phosphate synthase large chain (1060 aa).

Residues 1 to 401 (MPKRQDIHKI…SLLKAVRSLE (401 aa)) form a carboxyphosphate synthetic domain region. ATP-binding residues include R129, R169, G175, G176, R208, I210, E215, G241, V242, H243, Q284, and E298. The region spanning 133 to 327 (KNLMQKLHEP…IAKMAAKIAV (195 aa)) is the ATP-grasp 1 domain. Positions 284, 298, and 300 each coordinate Mg(2+). Q284, E298, and N300 together coordinate Mn(2+). The segment at 402-546 (VGLIHPERPA…YSTYESSTES (145 aa)) is oligomerization domain. Residues 547–929 (VKSDKPSVLV…ALYKAFEAAG (383 aa)) are carbamoyl phosphate synthetic domain. The 191-residue stretch at 671 to 861 (DQVIKSLKLP…LAQVATLAIL (191 aa)) folds into the ATP-grasp 2 domain. ATP contacts are provided by R707, H746, L748, E752, G777, I778, H779, S780, Q820, and E832. Positions 820, 832, and 834 each coordinate Mg(2+). 3 residues coordinate Mn(2+): Q820, E832, and N834. Residues 930–1060 (MHLPQFGRAL…QAFSISPIKS (131 aa)) form the MGS-like domain. Residues 930–1060 (MHLPQFGRAL…QAFSISPIKS (131 aa)) form an allosteric domain region.

It belongs to the CarB family. As to quaternary structure, composed of two chains; the small (or glutamine) chain promotes the hydrolysis of glutamine to ammonia, which is used by the large (or ammonia) chain to synthesize carbamoyl phosphate. Tetramer of heterodimers (alpha,beta)4. Mg(2+) is required as a cofactor. The cofactor is Mn(2+).

It carries out the reaction hydrogencarbonate + L-glutamine + 2 ATP + H2O = carbamoyl phosphate + L-glutamate + 2 ADP + phosphate + 2 H(+). The catalysed reaction is hydrogencarbonate + NH4(+) + 2 ATP = carbamoyl phosphate + 2 ADP + phosphate + 2 H(+). Its pathway is amino-acid biosynthesis; L-arginine biosynthesis; carbamoyl phosphate from bicarbonate: step 1/1. The protein operates within pyrimidine metabolism; UMP biosynthesis via de novo pathway; (S)-dihydroorotate from bicarbonate: step 1/3. Functionally, large subunit of the glutamine-dependent carbamoyl phosphate synthetase (CPSase). CPSase catalyzes the formation of carbamoyl phosphate from the ammonia moiety of glutamine, carbonate, and phosphate donated by ATP, constituting the first step of 2 biosynthetic pathways, one leading to arginine and/or urea and the other to pyrimidine nucleotides. The large subunit (synthetase) binds the substrates ammonia (free or transferred from glutamine from the small subunit), hydrogencarbonate and ATP and carries out an ATP-coupled ligase reaction, activating hydrogencarbonate by forming carboxy phosphate which reacts with ammonia to form carbamoyl phosphate. The sequence is that of Carbamoyl phosphate synthase large chain from Lacticaseibacillus paracasei (strain ATCC 334 / BCRC 17002 / CCUG 31169 / CIP 107868 / KCTC 3260 / NRRL B-441) (Lactobacillus paracasei).